The following is a 279-amino-acid chain: Acetylglutamate kinase (279 aa).

Residues 64 to 65 (GG), Arg86, and Asn177 each bind substrate.

It belongs to the acetylglutamate kinase family. ArgB subfamily.

Its subcellular location is the cytoplasm. The enzyme catalyses N-acetyl-L-glutamate + ATP = N-acetyl-L-glutamyl 5-phosphate + ADP. Its pathway is amino-acid biosynthesis; L-arginine biosynthesis; N(2)-acetyl-L-ornithine from L-glutamate: step 2/4. Catalyzes the ATP-dependent phosphorylation of N-acetyl-L-glutamate. The polypeptide is Acetylglutamate kinase (Campylobacter jejuni subsp. jejuni serotype O:2 (strain ATCC 700819 / NCTC 11168)).